We begin with the raw amino-acid sequence, 227 residues long: Albumin-2 (227 aa).

Hemopexin repeat units follow at residues 3 to 46 (PGYI…GPTP), 61 to 111 (SYGI…FPFF), 117 to 165 (ESGI…YPCF), and 171 to 221 (ESGA…WPSL). Residues Asn7 and Asp65 each contribute to the Ca(2+) site. Ser118 serves as a coordination point for spermine. Ca(2+) is bound by residues Asp121 and Asp175.

As to quaternary structure, monomer and homodimer. Dimers are prevalent in solution.

The protein resides in the cytoplasm. It localises to the cytosol. Functionally, may play a role in response to oxidative stress and polyamine biosynthesis. The monomeric form binds one hemin per monomer. In the dimeric form, about half of the dimers bind one molecule of spermine each under physiological conditions. Ligand binding is mutually exclusive as binding of hemin leads to dissociation of the dimer. This chain is Albumin-2, found in Lathyrus sativus (White vetchling).